A 576-amino-acid polypeptide reads, in one-letter code: Sulfite reductase [NADPH] hemoprotein beta-component (576 aa).

The [4Fe-4S] cluster site is built by Cys434, Cys440, Cys479, and Cys483. Cys483 lines the siroheme pocket.

This sequence belongs to the nitrite and sulfite reductase 4Fe-4S domain family. Alpha(8)-beta(8). The alpha component is a flavoprotein, the beta component is a hemoprotein. Siroheme serves as cofactor. The cofactor is [4Fe-4S] cluster.

The catalysed reaction is hydrogen sulfide + 3 NADP(+) + 3 H2O = sulfite + 3 NADPH + 4 H(+). It participates in sulfur metabolism; hydrogen sulfide biosynthesis; hydrogen sulfide from sulfite (NADPH route): step 1/1. Its function is as follows. Component of the sulfite reductase complex that catalyzes the 6-electron reduction of sulfite to sulfide. This is one of several activities required for the biosynthesis of L-cysteine from sulfate. The chain is Sulfite reductase [NADPH] hemoprotein beta-component from Oceanobacillus iheyensis (strain DSM 14371 / CIP 107618 / JCM 11309 / KCTC 3954 / HTE831).